Consider the following 276-residue polypeptide: NAD-capped RNA hydrolase NudC (276 aa).

R82 serves as a coordination point for substrate. Residues C112 and C115 each coordinate Zn(2+). E125 lines the substrate pocket. Zn(2+) contacts are provided by C130 and C133. Y138 provides a ligand contact to substrate. The Nudix hydrolase domain maps to 139–262 (PRISPSMIVL…SIARYLIDLY (124 aa)). A divalent metal cation-binding residues include A172, E188, and E192. A Nudix box motif is present at residues 173–194 (GFAEPGESAEDCLVREVREEVA). Residue 206–213 (QCWPFPHS) participates in substrate binding. E233 provides a ligand contact to a divalent metal cation. Residue A255 participates in substrate binding.

The protein belongs to the Nudix hydrolase family. NudC subfamily. In terms of assembly, homodimer. Mg(2+) is required as a cofactor. It depends on Mn(2+) as a cofactor. The cofactor is Zn(2+).

It carries out the reaction a 5'-end NAD(+)-phospho-ribonucleoside in mRNA + H2O = a 5'-end phospho-adenosine-phospho-ribonucleoside in mRNA + beta-nicotinamide D-ribonucleotide + 2 H(+). The catalysed reaction is NAD(+) + H2O = beta-nicotinamide D-ribonucleotide + AMP + 2 H(+). It catalyses the reaction NADH + H2O = reduced beta-nicotinamide D-ribonucleotide + AMP + 2 H(+). Its function is as follows. mRNA decapping enzyme that specifically removes the nicotinamide adenine dinucleotide (NAD) cap from a subset of mRNAs by hydrolyzing the diphosphate linkage to produce nicotinamide mononucleotide (NMN) and 5' monophosphate mRNA. The NAD-cap is present at the 5'-end of some mRNAs and stabilizes RNA against 5'-processing. Has preference for mRNAs with a 5'-end purine. Catalyzes the hydrolysis of a broad range of dinucleotide pyrophosphates. The polypeptide is NAD-capped RNA hydrolase NudC (Pseudomonas putida (strain W619)).